Here is a 1028-residue protein sequence, read N- to C-terminus: Contactin-6 (1028 aa).

The signal sequence occupies residues 1–19; it reads MRLLWKLVILLPLINSSAG. 6 consecutive Ig-like C2-type domains span residues 26–117, 122–208, 227–308, 318–402, 408–495, and 499–587; these read PIFT…AKLQ, EDFE…RSVQ, PKIE…RNLA, PEWE…AELR, PDFS…GSLI, and RTVI…ESLS. 6 disulfide bridges follow: Cys50–Cys100, Cys144–Cys196, Cys249–Cys297, Cys339–Cys386, Cys431–Cys479, and Cys521–Cys577. 2 N-linked (GlcNAc...) asparagine glycosylation sites follow: Asn65 and Asn193. Asn368, Asn377, and Asn468 each carry an N-linked (GlcNAc...) asparagine glycan. Fibronectin type-III domains follow at residues 600–698, 703–800, 805–901, and 902–996; these read PPED…TKAS, APVN…SGED, APRG…TKKS, and PPSQ…KMSS. Asn659, Asn765, Asn860, and Asn865 each carry an N-linked (GlcNAc...) asparagine glycan. Tyr882 is modified (phosphotyrosine). The segment covering 887–902 has biased composition (polar residues); the sequence is TGPSSPPVNVTTKKSP. The segment at 887-908 is disordered; that stretch reads TGPSSPPVNVTTKKSPPSQPPA. Residues Asn895, Asn931, Asn956, and Asn957 are each glycosylated (N-linked (GlcNAc...) asparagine). A lipid anchor (GPI-anchor amidated serine) is attached at Ser999. A propeptide spans 1000-1028 (removed in mature form); that stretch reads RGIQFLEPSTHFLSIVIVIFHCFAIQPLI.

It belongs to the immunoglobulin superfamily. Contactin family. Interacts with PTPRG. In terms of tissue distribution, expressed in nervous system. Highly expressed in cerebellum. Expressed at intermediate level in thalamus, subthalamic nucleus. Weakly expressed in corpus callosum, caudate nucleus and spinal cord.

It is found in the cell membrane. In terms of biological role, contactins mediate cell surface interactions during nervous system development. Participates in oligodendrocytes generation by acting as a ligand of NOTCH1. Its association with NOTCH1 promotes NOTCH1 activation through the released notch intracellular domain (NICD) and subsequent translocation to the nucleus. Involved in motor coordination. This Homo sapiens (Human) protein is Contactin-6 (CNTN6).